The chain runs to 209 residues: Small ribosomal subunit protein uS4 (209 aa).

Positions 9, 12, 26, and 31 each coordinate Zn(2+). The C4-type zinc finger occupies 9 to 31; the sequence is CKLCRREGMKLYLKGERCYTDKC. The S4 RNA-binding domain maps to 98–161; it reads ARLDNVVYRM…RDLEVIKKAI (64 aa).

The protein belongs to the universal ribosomal protein uS4 family. In terms of assembly, part of the 30S ribosomal subunit. Contacts protein S5. The interaction surface between S4 and S5 is involved in control of translational fidelity. The cofactor is Zn(2+).

One of the primary rRNA binding proteins, it binds directly to 16S rRNA where it nucleates assembly of the body of the 30S subunit. Functionally, with S5 and S12 plays an important role in translational accuracy. The chain is Small ribosomal subunit protein uS4 (rpsD) from Thermotoga maritima (strain ATCC 43589 / DSM 3109 / JCM 10099 / NBRC 100826 / MSB8).